The following is a 223-amino-acid chain: ATP phosphoribosyltransferase (223 aa).

This sequence belongs to the ATP phosphoribosyltransferase family. Short subfamily. In terms of assembly, heteromultimer composed of HisG and HisZ subunits.

It localises to the cytoplasm. The catalysed reaction is 1-(5-phospho-beta-D-ribosyl)-ATP + diphosphate = 5-phospho-alpha-D-ribose 1-diphosphate + ATP. It participates in amino-acid biosynthesis; L-histidine biosynthesis; L-histidine from 5-phospho-alpha-D-ribose 1-diphosphate: step 1/9. In terms of biological role, catalyzes the condensation of ATP and 5-phosphoribose 1-diphosphate to form N'-(5'-phosphoribosyl)-ATP (PR-ATP). Has a crucial role in the pathway because the rate of histidine biosynthesis seems to be controlled primarily by regulation of HisG enzymatic activity. In Bordetella pertussis (strain Tohama I / ATCC BAA-589 / NCTC 13251), this protein is ATP phosphoribosyltransferase.